The primary structure comprises 1120 residues: Transcriptional repressor NF-X1 (1120 aa).

Positions 9-26 (GTFKFNTDAAEFIPQEKK) are interaction with PABPC1 and PABC4. The disordered stretch occupies residues 22–295 (PQEKKNSGLN…LNERPAKSTC (274 aa)). Phosphoserine occurs at positions 50, 82, and 95. Residues 73 to 106 (YHPSGSKPKSQQTSFQSSPCNKSPKSHGLQNQPW) show a composition bias toward polar residues. Positions 111–120 (NEKHHIRVKK) are enriched in basic residues. Over residues 124 to 141 (LAEQTSDTAGLESSTRSE) the composition is skewed to polar residues. 2 positions are modified to phosphoserine: S129 and S150. 4 stretches are compositionally biased toward basic and acidic residues: residues 142 to 159 (SGTDLREHSPSESEKEVV), 188 to 202 (LKCEWSNRTTPKPED), 222 to 254 (SSRKGVLDGYGARRNEQRRYPQKRPPWEVEGAR), and 282 to 291 (PKDDLNERPA). A Phosphoserine modification is found at S326. The RING-type; atypical zinc finger occupies 358–409 (CMVCCELVRVTAPVWSCQSCYHVFHLNCIKKWARSPASQADGQSGWRCPACQ). 8 NF-X1-type zinc fingers span residues 453 to 471 (CPHSCNLLCHPGPCPPCPA), 506 to 525 (CGQHQCAELCHGGQCQPCQI), 567 to 586 (CGNHTCSQVCHPQPCQQCPR), 632 to 655 (CGSLDFIHTCEKLCHEGDCGPCSR), 694 to 713 (CGRHKCNEICCVDKEHKCPL), 721 to 740 (CGLHRCEEPCHRGNCQTCWQ), 832 to 854 (CGMHKCQRLCHKGECLVDEPCKQ), and 863 to 884 (CGHPCMAPCHTSSPCPVTACKA). Residues 994 to 1062 (LKFVSDVEKE…KRNVVVTAIR (69 aa)) form the R3H domain. The disordered stretch occupies residues 1081-1109 (QARPPPPIPHHRHQSDKNPGSSNLQKITK). Residues 1097 to 1106 (KNPGSSNLQK) are compositionally biased toward polar residues.

The protein belongs to the NFX1 family. Isoform 1 interacts with PABPC1 and PABPC4. In terms of assembly, (Microbial infection) Isoform 1 and isoform 3 interact with human papillomavirus (HPV) type-16 E6 oncoprotein. Post-translationally, isoform 3 is polyubiquitinated in the presence of HPV16 E6 protein; which leads to proteasomal degradation. Isoform 1 is not polyubiquitinated.

The protein resides in the nucleus. Binds to the X-box motif of MHC class II genes and represses their expression. May play an important role in regulating the duration of an inflammatory response by limiting the period in which MHC class II molecules are induced by interferon-gamma. Isoform 3 binds to the X-box motif of TERT promoter and represses its expression. Together with PABPC1 or PABPC4, isoform 1 acts as a coactivator for TERT expression. Mediates E2-dependent ubiquitination. This chain is Transcriptional repressor NF-X1 (NFX1), found in Homo sapiens (Human).